The sequence spans 217 residues: Ribosome maturation factor RimM (217 aa).

A PRC barrel domain is found at 115 to 186; sequence EDAWYDNQLV…TVTLTPPPGL (72 aa). Residues 181–217 are disordered; that stretch reads TPPPGLFEDLPDDAPAAGDESEPVSPPVTAEETPGGE.

Belongs to the RimM family. In terms of assembly, binds ribosomal protein uS19.

The protein localises to the cytoplasm. Functionally, an accessory protein needed during the final step in the assembly of 30S ribosomal subunit, possibly for assembly of the head region. Essential for efficient processing of 16S rRNA. May be needed both before and after RbfA during the maturation of 16S rRNA. It has affinity for free ribosomal 30S subunits but not for 70S ribosomes. In Leifsonia xyli subsp. xyli (strain CTCB07), this protein is Ribosome maturation factor RimM.